The sequence spans 425 residues: Histidine--tRNA ligase (425 aa).

It belongs to the class-II aminoacyl-tRNA synthetase family. As to quaternary structure, homodimer.

It localises to the cytoplasm. It catalyses the reaction tRNA(His) + L-histidine + ATP = L-histidyl-tRNA(His) + AMP + diphosphate + H(+). This chain is Histidine--tRNA ligase, found in Aeromonas hydrophila subsp. hydrophila (strain ATCC 7966 / DSM 30187 / BCRC 13018 / CCUG 14551 / JCM 1027 / KCTC 2358 / NCIMB 9240 / NCTC 8049).